Here is a 317-residue protein sequence, read N- to C-terminus: Serine/threonine-protein phosphatase PP1 isozyme 1 (317 aa).

4 residues coordinate Mn(2+): aspartate 75, histidine 77, aspartate 103, and asparagine 135. The active-site Proton donor is histidine 136. Mn(2+) is bound by residues histidine 184 and histidine 259.

This sequence belongs to the PPP phosphatase family. PP-1 subfamily. Mn(2+) is required as a cofactor.

It carries out the reaction O-phospho-L-seryl-[protein] + H2O = L-seryl-[protein] + phosphate. The enzyme catalyses O-phospho-L-threonyl-[protein] + H2O = L-threonyl-[protein] + phosphate. The polypeptide is Serine/threonine-protein phosphatase PP1 isozyme 1 (NPP1) (Nicotiana tabacum (Common tobacco)).